Reading from the N-terminus, the 115-residue chain is Secapin (115 aa).

An N-terminal signal peptide occupies residues 1 to 24 (MRFQVYILHLCFFILVVLTYLSQG). Residues 25–90 (QSYTTTTTTS…STENFDITNR (66 aa)) constitute a propeptide that is removed on maturation. Cysteine 99 and cysteine 110 form a disulfide bridge.

This sequence belongs to the secapin family. Expressed in the epidermis, fat body and venom gland.

The protein resides in the secreted. Functionally, serine protease inhibitor which exhibits antifibrinolytic, antielastolytic and antimicrobial activities. Displays antimicrobial activity against bacteria and fungi. Likely functions in the innate immune response to microbial infection and possibly in the venom, as an antifibrinolytic agent. The recombinant form inhibits trypsin (IC(50)=80.02 nM, Ki=127.25 nM), chymotrypsin (IC(50)=393.78 nM, Ki=432.59 nM), the microbial serine proteases subtilisin A (IC(50)=379.20 nM, Ki=492.77 nM) and proteinase K (IC(50)=189.43 nM, Ki=271.76 nM), plasmin (IC(50)=457.98 nM, Ki=502.91 nM), human elastase (IC(50)=347.81 nM, Ki=469.90 nM) and porcine elastase (IC(50)=94.70 nM, Ki=125.62 nM). Does not inhibit thrombin. Binds to human plasmin and inhibits the plasmin-mediated degradation of fibrin to fibrin degradation products, indicating its role as an anti-fibrinolytic agent. Also binds to bacterial and fungal surfaces. Exhibits antimicrobial activity against the Gram-positive bacteria B.thuringiensis (MIC=4.21 uM) and P.larvae (MIC=11.13 uM), the Gram-negative bacteria E.coli (MIC=6.50 uM) and the multidrug-resistant A.baumannii (MIC=5 ug/ml, MBC=10 ug/ml), as well as against the fungus B.bassiana (IC(50)=2.57 uM). The synthetic peptide also exhibits antimicrobial activity against the Gram-positive bacterium P.larvae (MIC=41.12 uM), the Gram-negative bacterium P.aeruginosa (MIC=65.75 uM), and the fungus B.bassiana (IC(50)=44.27 uM). Is also able to prevent A.baumannii biofilm formation and eliminate established A.baumannii biofilms. In vitro, does not induce an inflammatory response and has no cytotoxic activity against mammalian cells. This chain is Secapin, found in Apis cerana (Indian honeybee).